Reading from the N-terminus, the 223-residue chain is DNA mismatch repair protein MutH (223 aa).

This sequence belongs to the MutH family.

It is found in the cytoplasm. In terms of biological role, sequence-specific endonuclease that cleaves unmethylated GATC sequences. It is involved in DNA mismatch repair. This is DNA mismatch repair protein MutH from Shewanella sp. (strain MR-4).